Here is a 126-residue protein sequence, read N- to C-terminus: Anti-adapter protein IraD (126 aa).

This sequence belongs to the GpW/Gp25 family. IraD subfamily. In terms of assembly, interacts with RssB.

It localises to the cytoplasm. In terms of biological role, inhibits RpoS proteolysis by regulating RssB activity, thereby increasing the stability of the sigma stress factor RpoS during oxidative stress. Its effect on RpoS stability is due to its interaction with RssB, which probably blocks the interaction of RssB with RpoS, and the consequent delivery of the RssB-RpoS complex to the ClpXP protein degradation pathway. The sequence is that of Anti-adapter protein IraD from Salmonella arizonae (strain ATCC BAA-731 / CDC346-86 / RSK2980).